The chain runs to 253 residues: 1-(5-phosphoribosyl)-5-[(5-phosphoribosylamino)methylideneamino] imidazole-4-carboxamide isomerase (253 aa).

D8 (proton acceptor) is an active-site residue. The Proton donor role is filled by D131.

The protein belongs to the HisA/HisF family.

Its subcellular location is the cytoplasm. It carries out the reaction 1-(5-phospho-beta-D-ribosyl)-5-[(5-phospho-beta-D-ribosylamino)methylideneamino]imidazole-4-carboxamide = 5-[(5-phospho-1-deoxy-D-ribulos-1-ylimino)methylamino]-1-(5-phospho-beta-D-ribosyl)imidazole-4-carboxamide. It functions in the pathway amino-acid biosynthesis; L-histidine biosynthesis; L-histidine from 5-phospho-alpha-D-ribose 1-diphosphate: step 4/9. In Polynucleobacter necessarius subsp. necessarius (strain STIR1), this protein is 1-(5-phosphoribosyl)-5-[(5-phosphoribosylamino)methylideneamino] imidazole-4-carboxamide isomerase.